We begin with the raw amino-acid sequence, 461 residues long: Eukaryotic translation initiation factor 3 subunit M (461 aa).

Positions 42–61 (LLEPLRQQEQSDAEPDRKQR) are disordered. One can recognise a PCI domain in the interval 205–376 (DQELAQTHVV…SEFLVHRATY (172 aa)). Residues 422-461 (AAEEAAQGKSGDKKGDRRQRRDQPQQSQPAPEAATAVAAE) are disordered. Over residues 431 to 444 (SGDKKGDRRQRRDQ) the composition is skewed to basic and acidic residues. The span at 445–461 (PQQSQPAPEAATAVAAE) shows a compositional bias: low complexity.

This sequence belongs to the eIF-3 subunit M family. In terms of assembly, component of the eukaryotic translation initiation factor 3 (eIF-3) complex.

The protein resides in the cytoplasm. In terms of biological role, component of the eukaryotic translation initiation factor 3 (eIF-3) complex, which is involved in protein synthesis of a specialized repertoire of mRNAs and, together with other initiation factors, stimulates binding of mRNA and methionyl-tRNAi to the 40S ribosome. The eIF-3 complex specifically targets and initiates translation of a subset of mRNAs involved in cell proliferation. This is Eukaryotic translation initiation factor 3 subunit M from Aspergillus terreus (strain NIH 2624 / FGSC A1156).